The sequence spans 311 residues: Pyrimidine-specific ribonucleoside hydrolase RihA (311 aa).

Histidine 240 is a catalytic residue.

This sequence belongs to the IUNH family. RihA subfamily.

Functionally, hydrolyzes with equal efficiency cytidine or uridine to ribose and cytosine or uracil, respectively. In Escherichia coli O17:K52:H18 (strain UMN026 / ExPEC), this protein is Pyrimidine-specific ribonucleoside hydrolase RihA.